A 498-amino-acid polypeptide reads, in one-letter code: Acetyl-coenzyme A carboxylase carboxyl transferase subunit beta, chloroplastic (498 aa).

The 271-residue stretch at leucine 228 to threonine 498 folds into the CoA carboxyltransferase N-terminal domain. Residues cysteine 232, cysteine 235, cysteine 251, and cysteine 254 each coordinate Zn(2+). The C4-type zinc finger occupies cysteine 232–cysteine 254.

This sequence belongs to the AccD/PCCB family. As to quaternary structure, acetyl-CoA carboxylase is a heterohexamer composed of biotin carboxyl carrier protein, biotin carboxylase and 2 subunits each of ACCase subunit alpha and ACCase plastid-coded subunit beta (accD). It depends on Zn(2+) as a cofactor.

Its subcellular location is the plastid. It is found in the chloroplast stroma. The catalysed reaction is N(6)-carboxybiotinyl-L-lysyl-[protein] + acetyl-CoA = N(6)-biotinyl-L-lysyl-[protein] + malonyl-CoA. It functions in the pathway lipid metabolism; malonyl-CoA biosynthesis; malonyl-CoA from acetyl-CoA: step 1/1. Its function is as follows. Component of the acetyl coenzyme A carboxylase (ACC) complex. Biotin carboxylase (BC) catalyzes the carboxylation of biotin on its carrier protein (BCCP) and then the CO(2) group is transferred by the transcarboxylase to acetyl-CoA to form malonyl-CoA. The polypeptide is Acetyl-coenzyme A carboxylase carboxyl transferase subunit beta, chloroplastic (Populus alba (White poplar)).